A 446-amino-acid polypeptide reads, in one-letter code: Palmitoyltransferase PFA4 (446 aa).

At 1 to 8 the chain is on the cytoplasmic side; that stretch reads MAVQLKWP. A helical membrane pass occupies residues 9–29; it reads ILGVIIPCIIIFSLSYGSHYF. Topologically, residues 30-40 are lumenal; that stretch reads ILRHHLTMKQQ. Residues 41–61 traverse the membrane as a helical segment; that stretch reads LIYEFYVTMIWISYLLAIYTN. The Cytoplasmic portion of the chain corresponds to 62–161; that stretch reads PGRVPKNYKP…GNNNLPHFMR (100 aa). A DHHC domain is found at 114–164; the sequence is RYCKKCNNYKPPRSHHCKICQQCVLQMDHHCPWTLNCVGNNNLPHFMRFLG. Residue C144 is the S-palmitoyl cysteine intermediate of the active site. The helical transmembrane segment at 162-182 threads the bilayer; that stretch reads FLGWIIWGTGYLMIQLIKLII. Over 183 to 201 the chain is Lumenal; that stretch reads NYYENSNMPHYLFNKTELV. Residues 202 to 222 form a helical membrane-spanning segment; that stretch reads AIIAITPLNFFVFASILVLFI. Residues 223-446 are Cytoplasmic-facing; sequence RCLINICKGM…TDFGVDEDSD (224 aa).

The protein belongs to the DHHC palmitoyltransferase family. PFA4 subfamily.

The protein localises to the endoplasmic reticulum membrane. It carries out the reaction L-cysteinyl-[protein] + hexadecanoyl-CoA = S-hexadecanoyl-L-cysteinyl-[protein] + CoA. Functionally, mediates the reversible addition of palmitate to target proteins, thereby regulating their membrane association and biological function. In Candida albicans (strain SC5314 / ATCC MYA-2876) (Yeast), this protein is Palmitoyltransferase PFA4.